The chain runs to 151 residues: Deoxyuridine 5'-triphosphate nucleotidohydrolase (151 aa).

Substrate is bound by residues 70–72, asparagine 83, 87–89, and methionine 97; these read RSG and LID.

Belongs to the dUTPase family. The cofactor is Mg(2+).

It carries out the reaction dUTP + H2O = dUMP + diphosphate + H(+). Its pathway is pyrimidine metabolism; dUMP biosynthesis; dUMP from dCTP (dUTP route): step 2/2. In terms of biological role, this enzyme is involved in nucleotide metabolism: it produces dUMP, the immediate precursor of thymidine nucleotides and it decreases the intracellular concentration of dUTP so that uracil cannot be incorporated into DNA. The protein is Deoxyuridine 5'-triphosphate nucleotidohydrolase of Actinobacillus succinogenes (strain ATCC 55618 / DSM 22257 / CCUG 43843 / 130Z).